Consider the following 698-residue polypeptide: Protein CRAC (698 aa).

The 101-residue stretch at 22-122 (DVSYSSIMKK…FLTLLIARIR (101 aa)) folds into the PH domain. The tract at residues 594–630 (TGGGSVPSSQSTNNLQSSTSSMSSLSSSSTSTTKRSH) is disordered. A compositionally biased stretch (low complexity) spans 601–626 (SSQSTNNLQSSTSSMSSLSSSSTSTT).

The protein localises to the cytoplasm. Its function is as follows. Couples activated G protein to adenylyl cyclase signal transduction from surface cAMP receptor. Pianissimo a cytosolic regulator and CRAC, are both essential for activation of the enzyme adenylyl cyclase. Pianissimo and CRAC do not function redundantly. Both proteins are integral components of the adenylyl cyclase activation pathway. The protein is Protein CRAC (dagA) of Dictyostelium discoideum (Social amoeba).